Here is a 388-residue protein sequence, read N- to C-terminus: Endoglucanase 3 (388 aa).

The signal sequence occupies residues 1–16; sequence MKHSVLAGLFATGALA. A CBM1 domain is found at 17–52; sequence QGGAWQQCGGVGFSGSTSCVSGYTCVYLNDWYSQCQ. 2 cysteine pairs are disulfide-bonded: cysteine 24-cysteine 41 and cysteine 35-cysteine 51. Positions 53–91 are linker; that stretch reads PQPTTLRTTTTPGATSTTRSAPAATSTTPAKGKFKWFGI. Positions 56–81 are disordered; that stretch reads TTLRTTTTPGATSTTRSAPAATSTTP. 2 N-linked (GlcNAc...) asparagine glycosylation sites follow: asparagine 92 and asparagine 155. The tract at residues 92-388 is catalytic; sequence NQSCAEFGKG…YNSLLKKYVP (297 aa). Glutamate 215 serves as the catalytic Proton donor. Asparagine 259 carries an N-linked (GlcNAc...) asparagine glycan. Glutamate 322 serves as the catalytic Nucleophile.

The protein belongs to the glycosyl hydrolase 5 (cellulase A) family.

It carries out the reaction Endohydrolysis of (1-&gt;4)-beta-D-glucosidic linkages in cellulose, lichenin and cereal beta-D-glucans.. The sequence is that of Endoglucanase 3 (CMC3) from Humicola insolens (Soft-rot fungus).